The chain runs to 447 residues: Tubulin beta chain (447 aa).

Positions 11, 69, 138, 142, 143, 144, 204, and 226 each coordinate GTP. A Mg(2+)-binding site is contributed by E69. Positions 427 to 447 are disordered; it reads EAHMDDEEAEEAYEDEAPPEE. Over residues 430–447 the composition is skewed to acidic residues; that stretch reads MDDEEAEEAYEDEAPPEE.

This sequence belongs to the tubulin family. As to quaternary structure, dimer of alpha and beta chains. A typical microtubule is a hollow water-filled tube with an outer diameter of 25 nm and an inner diameter of 15 nM. Alpha-beta heterodimers associate head-to-tail to form protofilaments running lengthwise along the microtubule wall with the beta-tubulin subunit facing the microtubule plus end conferring a structural polarity. Microtubules usually have 13 protofilaments but different protofilament numbers can be found in some organisms and specialized cells. Mg(2+) serves as cofactor.

The protein resides in the cytoplasm. The protein localises to the cytoskeleton. Tubulin is the major constituent of microtubules, a cylinder consisting of laterally associated linear protofilaments composed of alpha- and beta-tubulin heterodimers. Microtubules grow by the addition of GTP-tubulin dimers to the microtubule end, where a stabilizing cap forms. Below the cap, tubulin dimers are in GDP-bound state, owing to GTPase activity of alpha-tubulin. This chain is Tubulin beta chain (TBB1), found in Uromyces fabae (Rust fungus).